We begin with the raw amino-acid sequence, 169 residues long: MAVLQVLHIPDERLRIVAEPVKEVNAEIQRIVDDMFDTMYAEEGIGLAATQVDIHKRIIVIDVSENREERLVLINPELLEQSGETGIEEGCLSIPEQRALVPRAEKVKIRALDRDGKSFELEADDLLAICIQHEMDHLVGKLFIDYLSPLKQQRIRQKVEKLDRMRTRA.

Residues Cys91 and His133 each contribute to the Fe cation site. Glu134 is a catalytic residue. His137 provides a ligand contact to Fe cation.

This sequence belongs to the polypeptide deformylase family. The cofactor is Fe(2+).

The catalysed reaction is N-terminal N-formyl-L-methionyl-[peptide] + H2O = N-terminal L-methionyl-[peptide] + formate. Functionally, removes the formyl group from the N-terminal Met of newly synthesized proteins. Requires at least a dipeptide for an efficient rate of reaction. N-terminal L-methionine is a prerequisite for activity but the enzyme has broad specificity at other positions. This Enterobacter sp. (strain 638) protein is Peptide deformylase.